The primary structure comprises 1311 residues: Clustered mitochondria protein homolog (1311 aa).

The disordered stretch occupies residues 1 to 46 (MAATNEVIPTSENPSDVSGSSQKLATEETALANGVDHEEEDSGEAG). Over residues 7–24 (VIPTSENPSDVSGSSQKL) the composition is skewed to polar residues. The Clu domain occupies 335–579 (DITRTQENYL…RVTPLDITWM (245 aa)). Disordered regions lie at residues 629-691 (ERKR…QERI) and 915-965 (QSQT…VNAS). The span at 655–691 (EASKSDEPTENGELAKKADESDKDAEPSKPAADQERI) shows a compositional bias: basic and acidic residues. The segment covering 915–930 (QSQTEAAAAPPTTNGE) has biased composition (polar residues). TPR repeat units lie at residues 1034–1067 (ARVY…SERT), 1076–1109 (LLNY…WKVV), and 1118–1151 (ITTI…CEEV). Positions 1236–1311 (VSPRVTLGQT…RGGAAAAAGK (76 aa)) are disordered. A compositionally biased stretch (polar residues) spans 1242–1253 (LGQTQLQPQVGQ). Residues 1259–1279 (AGRDSRSSRGLDSRSIDELLK) show a composition bias toward basic and acidic residues. Residues 1289-1303 (KNKKRPGRSNPKRRG) are compositionally biased toward basic residues.

It belongs to the CLU family. In terms of assembly, may associate with the eukaryotic translation initiation factor 3 (eIF-3) complex.

Its subcellular location is the cytoplasm. Its function is as follows. mRNA-binding protein involved in proper cytoplasmic distribution of mitochondria. This Sclerotinia sclerotiorum (strain ATCC 18683 / 1980 / Ss-1) (White mold) protein is Clustered mitochondria protein homolog.